The sequence spans 429 residues: Aspartate--tRNA(Asp/Asn) ligase (429 aa).

L-aspartate is bound at residue glutamate 166. The interval 188–191 (QLYK) is aspartate. Arginine 210 serves as a coordination point for L-aspartate. Residues 210–212 (RAE), 218–220 (RHL), and glutamate 352 contribute to the ATP site. The Mg(2+) site is built by glutamate 352 and serine 355. L-aspartate contacts are provided by serine 355 and arginine 359. Position 400–403 (400–403 (GAER)) interacts with ATP.

The protein belongs to the class-II aminoacyl-tRNA synthetase family. Type 2 subfamily. In terms of assembly, homodimer. It depends on Mg(2+) as a cofactor.

It is found in the cytoplasm. It catalyses the reaction tRNA(Asx) + L-aspartate + ATP = L-aspartyl-tRNA(Asx) + AMP + diphosphate. Its function is as follows. Aspartyl-tRNA synthetase with relaxed tRNA specificity since it is able to aspartylate not only its cognate tRNA(Asp) but also tRNA(Asn). Reaction proceeds in two steps: L-aspartate is first activated by ATP to form Asp-AMP and then transferred to the acceptor end of tRNA(Asp/Asn). This is Aspartate--tRNA(Asp/Asn) ligase from Methanocorpusculum labreanum (strain ATCC 43576 / DSM 4855 / Z).